Consider the following 545-residue polypeptide: Chaperonin GroEL 3 (545 aa).

ATP is bound by residues 30-33, Lys51, 87-91, Gly415, and Asp496; these read TLGP and DGTTT.

Belongs to the chaperonin (HSP60) family. Forms a cylinder of 14 subunits composed of two heptameric rings stacked back-to-back. Interacts with the co-chaperonin GroES.

It localises to the cytoplasm. It carries out the reaction ATP + H2O + a folded polypeptide = ADP + phosphate + an unfolded polypeptide.. Functionally, together with its co-chaperonin GroES, plays an essential role in assisting protein folding. The GroEL-GroES system forms a nano-cage that allows encapsulation of the non-native substrate proteins and provides a physical environment optimized to promote and accelerate protein folding. The sequence is that of Chaperonin GroEL 3 from Nitrobacter hamburgensis (strain DSM 10229 / NCIMB 13809 / X14).